Here is a 352-residue protein sequence, read N- to C-terminus: Coproporphyrin III ferrochelatase (352 aa).

The Fe-coproporphyrin III site is built by S52 and Y121. Fe(2+)-binding residues include H178 and E267.

The protein belongs to the ferrochelatase family.

It localises to the cytoplasm. The catalysed reaction is Fe-coproporphyrin III + 2 H(+) = coproporphyrin III + Fe(2+). The protein operates within porphyrin-containing compound metabolism; protoheme biosynthesis. Involved in coproporphyrin-dependent heme b biosynthesis. Catalyzes the insertion of ferrous iron into coproporphyrin III to form Fe-coproporphyrin III. The sequence is that of Coproporphyrin III ferrochelatase from Propionibacterium freudenreichii subsp. freudenreichii.